A 132-amino-acid chain; its full sequence is uncharacterized protein (132 aa).

Residues 1 to 25 (MRFTKVVGFLSVLGLAAVFPLTAQA) form the signal peptide.

This is an uncharacterized protein from Bacillus subtilis (strain 168).